Consider the following 600-residue polypeptide: Proline--tRNA ligase (600 aa).

It belongs to the class-II aminoacyl-tRNA synthetase family. ProS type 1 subfamily. Homodimer.

The protein resides in the cytoplasm. It carries out the reaction tRNA(Pro) + L-proline + ATP = L-prolyl-tRNA(Pro) + AMP + diphosphate. In terms of biological role, catalyzes the attachment of proline to tRNA(Pro) in a two-step reaction: proline is first activated by ATP to form Pro-AMP and then transferred to the acceptor end of tRNA(Pro). As ProRS can inadvertently accommodate and process non-cognate amino acids such as alanine and cysteine, to avoid such errors it has two additional distinct editing activities against alanine. One activity is designated as 'pretransfer' editing and involves the tRNA(Pro)-independent hydrolysis of activated Ala-AMP. The other activity is designated 'posttransfer' editing and involves deacylation of mischarged Ala-tRNA(Pro). The misacylated Cys-tRNA(Pro) is not edited by ProRS. The protein is Proline--tRNA ligase of Prochlorococcus marinus (strain MIT 9312).